The chain runs to 90 residues: MRLSVCLLLLTLALCCYRANAVVCQALGSEITGFLLAGKPVFKFQLAKFKAPLEAVAAKMEVKKCVDTMAYEKRVLITKTLGKIAEKCDR.

A signal peptide spans 1–21 (MRLSVCLLLLTLALCCYRANA).

In terms of assembly, heterodimer of a lipophilin A and a lipophilin C (mammaglobin B) monomer associated head to head. In terms of tissue distribution, expressed in lachrymal gland, thymus, kidney, testis, ovary and salivary gland.

The protein localises to the secreted. May bind androgens and other steroids, may also bind estramustine, a chemotherapeutic agent used for prostate cancer. May be under transcriptional regulation of steroid hormones. This is Secretoglobin family 1D member 1 (SCGB1D1) from Homo sapiens (Human).